Reading from the N-terminus, the 294-residue chain is Acetyl-coenzyme A carboxylase carboxyl transferase subunit beta (294 aa).

In terms of domain architecture, CoA carboxyltransferase N-terminal spans 25-294 (VWTKCTSCEQ…PLVVPVDGSH (270 aa)). Positions 29, 32, 48, and 51 each coordinate Zn(2+). The segment at 29–51 (CTSCEQVLYSAELERNLEVCPKC) adopts a C4-type zinc-finger fold.

It belongs to the AccD/PCCB family. Acetyl-CoA carboxylase is a heterohexamer composed of biotin carboxyl carrier protein (AccB), biotin carboxylase (AccC) and two subunits each of ACCase subunit alpha (AccA) and ACCase subunit beta (AccD). The cofactor is Zn(2+).

The protein localises to the cytoplasm. The enzyme catalyses N(6)-carboxybiotinyl-L-lysyl-[protein] + acetyl-CoA = N(6)-biotinyl-L-lysyl-[protein] + malonyl-CoA. The protein operates within lipid metabolism; malonyl-CoA biosynthesis; malonyl-CoA from acetyl-CoA: step 1/1. Functionally, component of the acetyl coenzyme A carboxylase (ACC) complex. Biotin carboxylase (BC) catalyzes the carboxylation of biotin on its carrier protein (BCCP) and then the CO(2) group is transferred by the transcarboxylase to acetyl-CoA to form malonyl-CoA. The protein is Acetyl-coenzyme A carboxylase carboxyl transferase subunit beta of Aliivibrio fischeri (strain ATCC 700601 / ES114) (Vibrio fischeri).